Here is a 449-residue protein sequence, read N- to C-terminus: Probable hexaprenyl pyrophosphate synthase, mitochondrial (449 aa).

3 residues coordinate isopentenyl diphosphate: Lys-122, Arg-125, and His-200. Mg(2+)-binding residues include Asp-207 and Asp-211. Arg-216 contacts an all-trans-polyprenyl diphosphate. Arg-217 serves as a coordination point for isopentenyl diphosphate. An all-trans-polyprenyl diphosphate is bound by residues Lys-300, Thr-301, Gln-338, and Lys-355.

It belongs to the FPP/GGPP synthase family. It depends on Mg(2+) as a cofactor.

It localises to the mitochondrion. It participates in cofactor biosynthesis; ubiquinone biosynthesis. Functionally, assembly of polyisoprenoid side chains. The polyprenyl synthase of coenzyme Q biosynthesis catalyzes the formation from isopentenyl diphosphate of all trans-polyprenyl pyrophosphates generally ranging in length of between 6 and 10 isoprene units depending on the species. The protein is Probable hexaprenyl pyrophosphate synthase, mitochondrial of Neurospora crassa (strain ATCC 24698 / 74-OR23-1A / CBS 708.71 / DSM 1257 / FGSC 987).